We begin with the raw amino-acid sequence, 616 residues long: Cleavage stimulation factor subunit 2 tau variant (616 aa).

In terms of domain architecture, RRM spans 16–94; that stretch reads RSVFVGNIPY…RALRVDNAAS (79 aa). Disordered regions lie at residues 203–241 and 262–418; these read GKSQ…QPQH and IPAP…SRAM. 2 stretches are compositionally biased toward low complexity: residues 223–233 and 319–331; these read PGPNVLLNQQN and VTPG…GLLG. T320 is modified (phosphothreonine). Residues 368–381 show a composition bias toward basic and acidic residues; the sequence is SGHDTRGPSSHEMR. The stretch at 418 to 422 is one 1-1 repeat; that stretch reads METRA. Positions 418–462 are 9 X 5 AA tandem repeats of M-E-T-R-[AG]; sequence METRAMETEVLETRVMERRGMETCAMETRGMEARGMDARGLEMRG. The 1-2; approximate repeat unit spans residues 423–427; sequence METEV. A 1-3; approximate repeat occupies 428-432; it reads LETRV. A 1-4; approximate repeat occupies 433–437; that stretch reads MERRG. A 1-5; approximate repeat occupies 438–442; that stretch reads METCA. A 1-6 repeat occupies 443–447; sequence METRG. A 1-7; approximate repeat occupies 448 to 452; sequence MEARG. The stretch at 453-457 is one 1-8; approximate repeat; that stretch reads MDARG. The 1-9; approximate repeat unit spans residues 458–462; it reads LEMRG. Tandem repeats lie at residues 505 to 509, 510 to 514, 515 to 519, and 520 to 524. Positions 505–549 are 9 X 5 AA tandem repeats of G-[AT]-G-[MI]-Q; that stretch reads GAGMQGTGIQGTGMQGAGIQGGGMQGAGIQGVSIQGGGIQGGGIQ. A 2-5; approximate repeat occupies 525-529; the sequence is GGGMQ. Residues 530 to 534 form a 2-6 repeat; sequence GAGIQ. Residues 535–539 form a 2-7; approximate repeat; it reads GVSIQ. A 2-8; approximate repeat occupies 540–544; sequence GGGIQ. The tract at residues 542–573 is disordered; sequence GIQGGGIQGASKQGGSQPSSFSPGQSQVTPQD. The 2-9; approximate repeat unit spans residues 545–549; that stretch reads GGGIQ. The span at 550–568 shows a compositional bias: low complexity; that stretch reads GASKQGGSQPSSFSPGQSQ. At S563 the chain carries Phosphoserine.

It is found in the nucleus. Functionally, may play a significant role in AAUAAA-independent mRNA polyadenylation in germ cells. Directly involved in the binding to pre-mRNAs. The sequence is that of Cleavage stimulation factor subunit 2 tau variant (CSTF2T) from Homo sapiens (Human).